A 627-amino-acid chain; its full sequence is Pheromone B alpha 2 receptor (627 aa).

Residues 1–7 (MLDPTYP) lie on the Extracellular side of the membrane. Residues 8–28 (AFPIFAFLGIVCCLVPLPWHL) form a helical membrane-spanning segment. At 29–35 (QSWNSGT) the chain is on the cytoplasmic side. The helical transmembrane segment at 36–56 (CFLMIWTAVACLNMFVNSIIW) threads the bilayer. Residues 57 to 69 (KDHAQNVAPVWCE) are Extracellular-facing. A helical transmembrane segment spans residues 70–90 (ISIRITLGASVGIPASSLCIV). Residues 91 to 102 (RRLYSIAKKFRA) are Cytoplasmic-facing. The chain crosses the membrane as a helical span at residues 103 to 123 (VMVDALICVLFPILYIILQIV). Residues 124-150 (VQGHRFNILENIGCFPAIINTPLTYPL) lie on the Extracellular side of the membrane. The chain crosses the membrane as a helical span at residues 151 to 171 (TFMWPVLIGVISFIYSTLALI). Residues 172–197 (QFNRHRLQFTQFLHSNSTLSVSRYLR) are Cytoplasmic-facing. A helical transmembrane segment spans residues 198–218 (LMALAMTEMMCTTPMGVFVII). Over 219–260 (LNAKATPVSPYVSWAVTHYGYGRIDQVPAIIWRSNRLLVASY) the chain is Extracellular. Residues 261 to 281 (ELTRWSSPAIALIFFFYFGFA) form a helical membrane-spanning segment. Residues 282 to 627 (QEARRNYAAA…ASPRTHRASV (346 aa)) lie on the Cytoplasmic side of the membrane. Disordered stretches follow at residues 363–405 (LPRP…SSPI), 479–505 (TVPQHNTADEPASPALPDTPSSCSSSA), and 518–627 (LPST…RASV). Low complexity predominate over residues 372-387 (SSSGFSSSDSTRFGSS). 2 stretches are compositionally biased toward polar residues: residues 519–533 (PSTTDVTRGTGSLPT) and 545–555 (SLSQLFGISSM). Over residues 569–607 (ATGTASPTTTAPAPASTTIAPASATMAPATTTTAPTTIA) the composition is skewed to low complexity.

This sequence belongs to the G-protein coupled receptor 4 family.

The protein localises to the cell membrane. Functionally, receptor for the BAP2 pheromone, a prenylated mating factor. The receptor/pheromone interaction may have a role in the fusion of clamp cells. The sequence is that of Pheromone B alpha 2 receptor (BAR2) from Schizophyllum commune (Split gill fungus).